The chain runs to 832 residues: Disintegrin and metalloproteinase domain-containing protein 23 (832 aa).

Residues 1 to 10 are compositionally biased toward polar residues; it reads MKPPGSSSRQ. Residues 1 to 37 form a disordered region; the sequence is MKPPGSSSRQPPLAGCSLAGASCGPQRGPAGSVPASA. An N-terminal signal peptide occupies residues 1–59; sequence MKPPGSSSRQPPLAGCSLAGASCGPQRGPAGSVPASAPARTPPCRLLLVLLLLPPLAAS. Low complexity predominate over residues 28 to 37; sequence GPAGSVPASA. Positions 60 to 286 are excised as a propeptide; it reads SRPRAWGAAA…ELQWLKRRKR (227 aa). N-linked (GlcNAc...) asparagine glycans are attached at residues Asn76, Asn96, Asn100, and Asn263. Topologically, residues 287-792 are extracellular; sequence AVNPSRGIFE…EGPKGPSATN (506 aa). The Peptidase M12B domain occupies 299–496; the sequence is KYLELMIVND…GGGACLFNRP (198 aa). Intrachain disulfides connect Cys408–Cys491, Cys450–Cys475, and Cys452–Cys459. Residues 502 to 588 enclose the Disintegrin domain; sequence PTECGNGYVE…QCPPNLHKQD (87 aa). 2 N-linked (GlcNAc...) asparagine glycosylation sites follow: Asn547 and Asn548. A disulfide bond links Cys560 and Cys580. The segment at 563 to 568 is may bind the integrin receptor; it reads AVNECD. 2 N-linked (GlcNAc...) asparagine glycosylation sites follow: Asn664 and Asn732. One can recognise an EGF-like domain in the interval 732-769; the sequence is NMSSCPLDSKGKVCSGHGVCSNEATCICDFTWAGTDCS. 3 cysteine pairs are disulfide-bonded: Cys736-Cys751, Cys745-Cys757, and Cys759-Cys768. Residues 793-813 traverse the membrane as a helical segment; sequence LIIGSIAGAILVAAIVLGGTG. Residues 814–832 are Cytoplasmic-facing; it reads WGFKNVKKRRFDPTQQGPI.

As to quaternary structure, can bind to LGI1 and LGI4. Ligand for integrin alpha-V/beta-3. In terms of tissue distribution, highly expressed in the brain and weakly expressed in the heart. In the brain, expressed prominently in the amygdala, caudate nucleus, hypothalamus, thalamus, cerebral cortex and occipital pole.

It localises to the cell membrane. It is found in the secreted. May play a role in cell-cell and cell-matrix interactions. This is a non-catalytic metalloprotease-like protein. This Homo sapiens (Human) protein is Disintegrin and metalloproteinase domain-containing protein 23 (ADAM23).